The sequence spans 65 residues: UPF0434 protein CC_0108 (65 aa).

Belongs to the UPF0434 family.

This chain is UPF0434 protein CC_0108, found in Caulobacter vibrioides (strain ATCC 19089 / CIP 103742 / CB 15) (Caulobacter crescentus).